The primary structure comprises 507 residues: Cytochrome P450 71D2 (507 aa).

Transmembrane regions (helical) follow at residues 6 to 26 and 447 to 467; these read LPFN…LIYG and ICPG…LLLY. Heme is bound at residue Cys448.

The protein belongs to the cytochrome P450 family.

Its subcellular location is the membrane. The chain is Cytochrome P450 71D2 from Catharanthus roseus (Madagascar periwinkle).